The sequence spans 104 residues: Replication restart protein PriB (104 aa).

An SSB domain is found at 1-101 (MTNRLVLSGT…LHAEQIELID (101 aa)).

This sequence belongs to the PriB family. Homodimer. Interacts with PriA and DnaT. Component of the replication restart primosome. Primosome assembly occurs via a 'hand-off' mechanism. PriA binds to replication forks, subsequently PriB then DnaT bind; DnaT then displaces ssDNA to generate the helicase loading substrate.

Functionally, involved in the restart of stalled replication forks, which reloads the replicative helicase on sites other than the origin of replication; the PriA-PriB pathway is the major replication restart pathway. During primosome assembly it facilitates complex formation between PriA and DnaT on DNA; stabilizes PriA on DNA. Stimulates the DNA unwinding activity of PriA helicase. The chain is Replication restart protein PriB from Escherichia coli (strain ATCC 8739 / DSM 1576 / NBRC 3972 / NCIMB 8545 / WDCM 00012 / Crooks).